The primary structure comprises 171 residues: Ribosome-binding factor A (171 aa).

Low complexity predominate over residues 120–132; that stretch reads AALAAAAQPAGDP. The interval 120-171 is disordered; the sequence is AALAAAAQPAGDPDPYKKPVDHTDDWDEDDEDDRDGDDAVDALDAAADVPRL. The span at 133–142 shows a compositional bias: basic and acidic residues; the sequence is DPYKKPVDHT. Acidic residues predominate over residues 143 to 160; it reads DDWDEDDEDDRDGDDAVD. Positions 161-171 are enriched in low complexity; that stretch reads ALDAAADVPRL.

Belongs to the RbfA family. As to quaternary structure, monomer. Binds 30S ribosomal subunits, but not 50S ribosomal subunits or 70S ribosomes.

It is found in the cytoplasm. One of several proteins that assist in the late maturation steps of the functional core of the 30S ribosomal subunit. Associates with free 30S ribosomal subunits (but not with 30S subunits that are part of 70S ribosomes or polysomes). Required for efficient processing of 16S rRNA. May interact with the 5'-terminal helix region of 16S rRNA. This Kineococcus radiotolerans (strain ATCC BAA-149 / DSM 14245 / SRS30216) protein is Ribosome-binding factor A.